The following is a 483-amino-acid chain: SWI/SNF-related matrix-associated actin-dependent regulator of chromatin subfamily D member 3 (483 aa).

At A2 the chain carries N-acetylalanine. Residues 27–102 (RPGMPSGARM…ARSRSAKRRK (76 aa)) form a disordered region. The span at 78–88 (QSQAQGQGQPV) shows a compositional bias: low complexity. Residue S178 is modified to Phosphoserine. Positions 258 to 335 (YQPPQFKLDP…PQRLTALLLP (78 aa)) constitute an SWIB/MDM2 domain.

The protein belongs to the SMARCD family. In terms of assembly, component of the multiprotein chromatin-remodeling complexes SWI/SNF: SWI/SNF-A (BAF), SWI/SNF-B (PBAF) and related complexes. The canonical complex contains a catalytic subunit (either SMARCA4/BRG1/BAF190A or SMARCA2/BRM/BAF190B) and at least SMARCE1, ACTL6A/BAF53, SMARCC1/BAF155, SMARCC2/BAF170, and SMARCB1/SNF5/BAF47. Other subunits specific to each of the complexes may also be present permitting several possible combinations developmentally and tissue specific. Component of the BAF complex, which includes at least actin (ACTB), ARID1A/BAF250A, ARID1B/BAF250B, SMARCA2/BRM, SMARCA4/BRG1/BAF190A, ACTL6A/BAF53, ACTL6B/BAF53B, SMARCE1/BAF57, SMARCC1/BAF155, SMARCC2/BAF170, SMARCB1/SNF5/INI1, and one or more SMARCD1/BAF60A, SMARCD2/BAF60B, or SMARCD3/BAF60C. In muscle cells, the BAF complex also contains DPF3. Component of neural progenitors-specific chromatin remodeling complex (npBAF complex) composed of at least, ARID1A/BAF250A or ARID1B/BAF250B, SMARCD1/BAF60A, SMARCD3/BAF60C, SMARCA2/BRM/BAF190B, SMARCA4/BRG1/BAF190A, SMARCB1/BAF47, SMARCC1/BAF155, SMARCE1/BAF57, SMARCC2/BAF170, PHF10/BAF45A, ACTL6A/BAF53A and actin. Component of neuron-specific chromatin remodeling complex (nBAF complex) composed of at least, ARID1A/BAF250A or ARID1B/BAF250B, SMARCD1/BAF60A, SMARCD3/BAF60C, SMARCA2/BRM/BAF190B, SMARCA4/BRG1/BAF190A, SMARCB1/BAF47, SMARCC1/BAF155, SMARCE1/BAF57, SMARCC2/BAF170, DPF1/BAF45B, DPF3/BAF45C, ACTL6B/BAF53B and actin. May be a component of the SWI/SNF-B (PBAF) chromatin remodeling complex, at least composed of SMARCA4/BRG1, SMARCB1/BAF47/SNF5, ACTL6A/BAF53A or ACTL6B/BAF53B, SMARCE1/BAF57, SMARCD1/BAF60A, SMARCD2/BAF60B, perhaps SMARCD3/BAF60C, SMARCC1/BAF155, SMARCC2/BAF170, PBRM1/BAF180, ARID2/BAF200 and actin. Component of SWI/SNF (GBAF) subcomplex, which includes at least BICRA or BICRAL (mutually exclusive), BRD9, SS18, SMARCA2/BRM, SMARCA4/BRG1/BAF190A, ACTL6A/BAF53, SMARCC1/BAF155, and SMARCD1/BAF60A. Interacts with SMARCA4/BRG1/BAF190A. The precise distribution of the related SMARCD1, SMARCD2 and SMARCD3 proteins among these and other SWI/SNF nucleosome-remodeling complexes is not fully known. May allow recruitment of SWI/SNF containing complexes specifically to promoters where these factors are located. Also interacts with several nuclear receptors including PPARG/NR1C3, RXRA/NR1F1, ESR1, NR5A1, NR5A2/LRH1 and other transcriptional activators including the HLH protein SREBF1/SREBP1 and the homeobox protein PBX1. Interacts with PRDM1/BLIMP1. Ubiquitously expressed.

It localises to the nucleus. Involved in transcriptional activation and repression of select genes by chromatin remodeling (alteration of DNA-nucleosome topology). Component of SWI/SNF chromatin remodeling complexes that carry out key enzymatic activities, changing chromatin structure by altering DNA-histone contacts within a nucleosome in an ATP-dependent manner. Stimulates nuclear receptor mediated transcription. Belongs to the neural progenitors-specific chromatin remodeling complex (npBAF complex) and the neuron-specific chromatin remodeling complex (nBAF complex). During neural development a switch from a stem/progenitor to a postmitotic chromatin remodeling mechanism occurs as neurons exit the cell cycle and become committed to their adult state. The transition from proliferating neural stem/progenitor cells to postmitotic neurons requires a switch in subunit composition of the npBAF and nBAF complexes. As neural progenitors exit mitosis and differentiate into neurons, npBAF complexes which contain ACTL6A/BAF53A and PHF10/BAF45A, are exchanged for homologous alternative ACTL6B/BAF53B and DPF1/BAF45B or DPF3/BAF45C subunits in neuron-specific complexes (nBAF). The npBAF complex is essential for the self-renewal/proliferative capacity of the multipotent neural stem cells. The nBAF complex along with CREST plays a role regulating the activity of genes essential for dendrite growth. The protein is SWI/SNF-related matrix-associated actin-dependent regulator of chromatin subfamily D member 3 (Smarcd3) of Mus musculus (Mouse).